We begin with the raw amino-acid sequence, 1172 residues long: MAERVKILKPGLTNRSRSASIDMIVMDEIAKNNPIYTNDNSNNNNNDETSSNISGSNSIQNLSLNNLNNLSGGGGGSNSNSVNNTISERNPDSPRFRSNTGNLQTMMMVSNGNIIGSIQSPSPPISPRAQMTAPNLSKFLDQHTPPPSPKPEHLSGHLRIQQQHHSGIYRNLSFSSVNSSTSFGDFKRSTNLFQPPQSQSQQQQQLQLQQQQQQSMPNLSLGNNINSNNNNNNGSENNDISMEIKDNTSGIDTSVKSFSPRKKRKKENKIIRRIRRWMTWVISSNIWLTIMIISIIFVLFIDDIIGASGSPSSNAIDYSIMAVKCSIIGFFSIDIILNLFCFQQEYFPGTIVFWLDLISLISIVTDIHHFQNYYANLVLSITVNTRIIRICGSFIRISLISTLYNRFLRKQTLPSEGLEVEASKLGDKLIRLTTNKIVLLALAVLFATQLLVYESDTPTQYIQSTISSFEYLSSTYGLQSPEFTGVFNNYQLNNEKLLFTQISNQKIFNLPDKINSLQERSILKYNYLNSIIWIDNSYYIKYSCILHLCLTVFVILVLITINLLIVNDAHWLVINPLENVLTIVKLLSKQNSMIKQGGGGSGIVGGFSNNTINSNSNLNSNSNLNSNSNSNLVRNRVESIGNKSDTADTTSSSGIDNEEPDEADFLLGMLNEIDDSLQAAKEKVEEESIQNSILKKDIEDLYVEKYILQVHLRSIVRKINFHDPIGHYLKNRQLLLMQSNATFNTLEQDSEDDIRFKLNDDGLPDLNVIQYATIDKLIEKLTMAEAHDLKFANVFLLTYRKFLSPVELMERLTIRFCVTPTMELPEKLLASKEQVEQWRKTKQEQIRTSVFNTIKLWIGIYNWDFYENPDLYELFNNLVNKIMPFCKMEKHATYIDSIHKRKMATYIQDPPYIPIEPLTQEEIAETMVLEDRLLFNFDISDIAIQITLMEFDLFKNIKSKEFLNLAWTHKTEKTRLSPNIVRFIEHFNSVSFWLQTCIVKSGKIKERVAVLKKVIALADVFVQLNNYYGAMEVLSSLESSAVSRLHKTWEQVPQSSIQSLQSLQKLLSPQENFKNYRERISKCGSCCIPYIGLYLSDLTFIHEGNPDYYQQSQLINFSKLREVAITINTIKQFQNIFYYYEKNQNIRSQMNFKSPGADIIWKMSLSCEQRNK.

Composition is skewed to low complexity over residues Pro34–Leu70 and Asn78–Ser87. Disordered stretches follow at residues Pro34–Thr100, Lys138–Gln162, and Phe186–Asp246. Over residues Gln194–Ser241 the composition is skewed to low complexity. The next 6 helical transmembrane spans lie at Ile286–Gly306, Ile320–Phe340, Phe347–Ile367, Val378–Ile400, Leu432–Val452, and Ile545–Ile565. Positions Leu666 to Tyr702 form a coiled coil. The N-terminal Ras-GEF domain maps to Asp765–Met903. The region spanning Asp938–Arg1170 is the Ras-GEF domain.

The protein resides in the membrane. Functionally, promotes the exchange of Ras-bound GDP by GTP. The sequence is that of Ras guanine nucleotide exchange factor W (gefW) from Dictyostelium discoideum (Social amoeba).